A 228-amino-acid chain; its full sequence is Putative elongation factor Tu-like protein (228 aa).

The tr-type G domain maps to 6–212; the sequence is KPHINVGTIG…LPIREKDNPF (207 aa). Residues 15–22 form a G1 region; sequence GHVDHGKT. Positions 59–63 are G2; that stretch reads GITIS. Positions 80 to 83 are G3; the sequence is DCPG. Residues 135 to 138 form a G4 region; the sequence is NKCD. The interval 173–175 is G5; it reads SAV.

It belongs to the TRAFAC class translation factor GTPase superfamily. Classic translation factor GTPase family. EF-Tu/EF-1A subfamily.

This Ehrlichia ruminantium (strain Welgevonden) protein is Putative elongation factor Tu-like protein.